The chain runs to 154 residues: Large ribosomal subunit protein uL22 (154 aa).

It belongs to the universal ribosomal protein uL22 family. In terms of assembly, part of the 50S ribosomal subunit.

Functionally, this protein binds specifically to 23S rRNA. It makes multiple contacts with different domains of the 23S rRNA in the assembled 50S subunit and ribosome. In terms of biological role, the globular domain of the protein is located near the polypeptide exit tunnel on the outside of the subunit, while an extended beta-hairpin is found that lines the wall of the exit tunnel in the center of the 70S ribosome. The polypeptide is Large ribosomal subunit protein uL22 (Natronomonas pharaonis (strain ATCC 35678 / DSM 2160 / CIP 103997 / JCM 8858 / NBRC 14720 / NCIMB 2260 / Gabara) (Halobacterium pharaonis)).